We begin with the raw amino-acid sequence, 430 residues long: Adenylosuccinate synthetase (430 aa).

GTP is bound by residues 12 to 18 (GDEGKGK) and 40 to 42 (GHT). Aspartate 13 acts as the Proton acceptor in catalysis. Residues aspartate 13 and glycine 40 each contribute to the Mg(2+) site. Residues 13 to 16 (DEGK), 38 to 41 (NAGH), threonine 130, arginine 144, glutamine 224, threonine 239, and arginine 303 contribute to the IMP site. Histidine 41 functions as the Proton donor in the catalytic mechanism. 299-305 (TVTGRKR) contributes to the substrate binding site. Residues arginine 305, 331–333 (KLD), and 413–415 (STS) contribute to the GTP site.

The protein belongs to the adenylosuccinate synthetase family. Homodimer. Mg(2+) is required as a cofactor.

The protein resides in the cytoplasm. The catalysed reaction is IMP + L-aspartate + GTP = N(6)-(1,2-dicarboxyethyl)-AMP + GDP + phosphate + 2 H(+). It participates in purine metabolism; AMP biosynthesis via de novo pathway; AMP from IMP: step 1/2. Functionally, plays an important role in the de novo pathway of purine nucleotide biosynthesis. Catalyzes the first committed step in the biosynthesis of AMP from IMP. The chain is Adenylosuccinate synthetase from Parvibaculum lavamentivorans (strain DS-1 / DSM 13023 / NCIMB 13966).